A 542-amino-acid polypeptide reads, in one-letter code: MNGKRPAEPGPARVGKKRKKEVMAEFSDAVTEETLKKQVAEAWSRRTPFSHEVIVMDMDPFLHCVIPNFIQSQDFLEGLQKELMNLDFHEKYNDLYKFQQSDDLKKRREPHISALRKILFEDFRSWLSDISKIDLESTIDMSCAKYEFTDALLCHDDELEGRRIAFILYLVPPWDRSLGGTLDLYSIDEHFQPKQIVKSLIPSWNKLVFFEVSPVSFHQVSEVLSEEKSRLSISGWFHGPSLTRPPNHFEPPIPRSPHIPQDHEILYDWINPTYLDMDYQVQIQEEFEESSEILLKEFLKPEKFMKVCEALEHGDVEWSSRGPPNKRFYEKAEESKLPEILKECMKLFHSEALFLLLSNFTGLKLHFLAPSEEDEMNDKKEAEAADITEEGTSHSPPEPENNQTAISNNSQQSNEQTDPEPEENETKKESSVPTCQGELRRWKTGHYTLIHDHSKAEFALDLILYCGCEGWEPEYGGFTSYIAKGEDEELLTVNPESNSLALVYRDRETLKFVKHINHRSLEQKKTFPNRTGFWDFSFIYYE.

The region spanning 134-239 (DLESTIDMSC…RLSISGWFHG (106 aa)) is the Fe2OG dioxygenase domain. 2 residues coordinate Fe cation: histidine 155 and aspartate 157. Tyrosine 169 is a 2-oxoglutarate binding site. Histidine 218 contributes to the Fe cation binding site. A 2-oxoglutarate-binding site is contributed by arginine 230. Residues 373–435 (EDEMNDKKEA…TKKESSVPTC (63 aa)) are disordered. Over residues 400 to 416 (ENNQTAISNNSQQSNEQ) the composition is skewed to polar residues.

The protein belongs to the TPA1 family. As to quaternary structure, monomer. Fe(2+) serves as cofactor. L-ascorbate is required as a cofactor.

Its subcellular location is the cytoplasm. The protein resides in the nucleus. The catalysed reaction is [ribosomal protein uS12]-L-proline + 2-oxoglutarate + O2 = [ribosomal protein uS12]-(3S)-3-hydroxy-L-proline + succinate + CO2. Its function is as follows. Prolyl 3-hydroxylase that catalyzes 3-hydroxylation of 'Pro-62' of small ribosomal subunit uS12 (RPS23), thereby regulating protein translation termination efficiency. Involved in stress granule formation. The polypeptide is Prolyl 3-hydroxylase OGFOD1 (OGFOD1) (Pongo abelii (Sumatran orangutan)).